Here is a 213-residue protein sequence, read N- to C-terminus: Dimethyl sulfoxide reductase transcriptional activator (213 aa).

The HTH bat-type domain occupies 155-206; the sequence is LTAKQREAALIAVHHGYYETPRRTELATLAEALGISKSALSQRLNAVEAKLA.

Functionally, involved in activating dmsEABCD gene expression related to dimethyl sulfoxide (DMSO) reductase. Required for anaerobic respiration on dimethyl sulfoxide (DMSO). The protein is Dimethyl sulfoxide reductase transcriptional activator of Haloferax volcanii (strain ATCC 29605 / DSM 3757 / JCM 8879 / NBRC 14742 / NCIMB 2012 / VKM B-1768 / DS2) (Halobacterium volcanii).